The following is a 211-amino-acid chain: Phosphatidylglycerophosphatase C (211 aa).

Over 1 to 33 the chain is Cytoplasmic; the sequence is MATHERRVVFFDLDGTLHQQDMFGSFLRYLLRR. A helical membrane pass occupies residues 34–54; sequence QPLNALLVLPLLPIIAIALLI. The Periplasmic portion of the chain corresponds to 55 to 211; that stretch reads KGRAARWPMS…TPRGELQQLE (157 aa).

Mg(2+) is required as a cofactor.

The protein localises to the cell inner membrane. It catalyses the reaction a 1,2-diacyl-sn-glycero-3-phospho-(1'-sn-glycero-3'-phosphate) + H2O = a 1,2-diacyl-sn-glycero-3-phospho-(1'-sn-glycerol) + phosphate. It functions in the pathway phospholipid metabolism; phosphatidylglycerol biosynthesis; phosphatidylglycerol from CDP-diacylglycerol: step 2/2. Functionally, lipid phosphatase which dephosphorylates phosphatidylglycerophosphate (PGP) to phosphatidylglycerol (PG). In Escherichia coli (strain K12), this protein is Phosphatidylglycerophosphatase C (pgpC).